Here is a 166-residue protein sequence, read N- to C-terminus: 16S rRNA aminocarboxypropyltransferase (166 aa).

Residues Thr17, Val62, Ile84, Tyr99, and Ser103 each contribute to the S-adenosyl-L-methionine site.

It belongs to the TDD superfamily. TSR3 family.

It localises to the cytoplasm. The catalysed reaction is an N(1)-methylpseudouridine in rRNA + S-adenosyl-L-methionine = N(1)-methyl-N(3)-[(3S)-3-amino-3-carboxypropyl]pseudouridine in rRNA + S-methyl-5'-thioadenosine + H(+). Functionally, aminocarboxypropyltransferase that catalyzes the aminocarboxypropyl transfer on pseudouridine corresponding to position 914 in M.jannaschii 16S rRNA. It constitutes the last step in biosynthesis of the hypermodified N1-methyl-N3-(3-amino-3-carboxypropyl) pseudouridine (m1acp3-Psi). The polypeptide is 16S rRNA aminocarboxypropyltransferase (Saccharolobus solfataricus (strain ATCC 35092 / DSM 1617 / JCM 11322 / P2) (Sulfolobus solfataricus)).